The chain runs to 109 residues: Spermidine export protein MdtI (109 aa).

4 helical membrane passes run 6–26 (WVHAAWLALAIVLEIVANVFL), 36–56 (IFGLLSQAAVLAAFSALSQAV), 64–84 (AYALWGGFGIAATLAAGWILF), and 88–108 (LNRKGWIGLVLLLAGMIMVKL).

This sequence belongs to the drug/metabolite transporter (DMT) superfamily. Small multidrug resistance (SMR) (TC 2.A.7.1) family. MdtI subfamily. In terms of assembly, forms a complex with MdtJ.

The protein localises to the cell inner membrane. Its function is as follows. Catalyzes the excretion of spermidine. This is Spermidine export protein MdtI from Shigella dysenteriae serotype 1 (strain Sd197).